We begin with the raw amino-acid sequence, 107 residues long: Translation initiation factor IF-1, chloroplastic (107 aa).

Residues 8–83 (REKKNPREAK…SKGRIIYRLP (76 aa)) enclose the S1-like domain. The tract at residues 81 to 107 (RLPHKDSKRTEDSKDTEDLKDTKDSKG) is disordered. A compositionally biased stretch (basic and acidic residues) spans 83–107 (PHKDSKRTEDSKDTEDLKDTKDSKG).

Belongs to the IF-1 family. In terms of assembly, component of the 30S ribosomal translation pre-initiation complex which assembles on the 30S ribosome in the order IF-2 and IF-3, IF-1 and N-formylmethionyl-tRNA(fMet); mRNA recruitment can occur at any time during PIC assembly.

The protein resides in the plastid. It localises to the chloroplast. Functionally, one of the essential components for the initiation of protein synthesis. Stabilizes the binding of IF-2 and IF-3 on the 30S subunit to which N-formylmethionyl-tRNA(fMet) subsequently binds. Helps modulate mRNA selection, yielding the 30S pre-initiation complex (PIC). Upon addition of the 50S ribosomal subunit IF-1, IF-2 and IF-3 are released leaving the mature 70S translation initiation complex. This Oryza sativa subsp. indica (Rice) protein is Translation initiation factor IF-1, chloroplastic.